We begin with the raw amino-acid sequence, 88 residues long: Apolipoprotein C-I (88 aa).

The signal sequence occupies residues 1 to 26 (MRLFLSLPVLVVVLAMVLEGPAPAQA).

Belongs to the apolipoprotein C1 family.

It is found in the secreted. In terms of biological role, inhibitor of lipoprotein binding to the low density lipoprotein (LDL) receptor, LDL receptor-related protein, and very low density lipoprotein (VLDL) receptor. Associates with high density lipoproteins (HDL) and the triacylglycerol-rich lipoproteins in the plasma and makes up about 10% of the protein of the VLDL and 2% of that of HDL. Appears to interfere directly with fatty acid uptake and is also the major plasma inhibitor of cholesteryl ester transfer protein (CETP). Binds free fatty acids and reduces their intracellular esterification. Modulates the interaction of APOE with beta-migrating VLDL and inhibits binding of beta-VLDL to the LDL receptor-related protein. This chain is Apolipoprotein C-I (APOC1), found in Arctocephalus gazella (Antarctic fur seal).